The following is a 595-amino-acid chain: Isoprene synthase, chloroplastic (595 aa).

The transit peptide at 1–37 (MATELLCLHRPISLTHKLFRNPLPKVIQATPLTLKLR) directs the protein to the chloroplast. Asp345 is a dimethylallyl diphosphate binding site. Mg(2+)-binding residues include Asp345 and Asp349. The DDXXD motif signature appears at 345-349 (DDIYD). 3 residues coordinate dimethylallyl diphosphate: Glu423, Arg486, and Asn489. Residues Asn489, Ser493, and Glu497 each contribute to the Mg(2+) site.

The protein belongs to the terpene synthase family. Tpsb subfamily. The cofactor is Mg(2+). In terms of tissue distribution, predominantly expressed in leaves.

It localises to the plastid. It is found in the chloroplast. The catalysed reaction is dimethylallyl diphosphate = isoprene + diphosphate. Its pathway is terpene metabolism. Lyase that catalyzes the formation of isoprene from dimethylallyl diphosphate, but not from isopentenyl diphosphate or geranyl diphosphate. This Populus alba (White poplar) protein is Isoprene synthase, chloroplastic.